We begin with the raw amino-acid sequence, 117 residues long: Large ribosomal subunit protein bL19 (117 aa).

It belongs to the bacterial ribosomal protein bL19 family.

Its function is as follows. This protein is located at the 30S-50S ribosomal subunit interface and may play a role in the structure and function of the aminoacyl-tRNA binding site. The sequence is that of Large ribosomal subunit protein bL19 from Bacteroides fragilis (strain ATCC 25285 / DSM 2151 / CCUG 4856 / JCM 11019 / LMG 10263 / NCTC 9343 / Onslow / VPI 2553 / EN-2).